Here is an 852-residue protein sequence, read N- to C-terminus: Zinc finger and SCAN domain-containing protein 29 (852 aa).

The SCAN box domain occupies Arg18–Pro100. 3 disordered regions span residues Leu96–Gly182, Ala347–Pro400, and Pro502–Val557. A Glycyl lysine isopeptide (Lys-Gly) (interchain with G-Cter in SUMO2) cross-link involves residue Lys112. Residue Ser153 is modified to Phosphoserine. Residue Lys180 forms a Glycyl lysine isopeptide (Lys-Gly) (interchain with G-Cter in SUMO2) linkage. The segment covering Glu508–Thr517 has biased composition (polar residues). Over residues Glu528–Glu545 the composition is skewed to acidic residues. A Phosphoserine modification is found at Ser561. Residue Lys576 forms a Glycyl lysine isopeptide (Lys-Gly) (interchain with G-Cter in SUMO2) linkage. Residues Gln603–Arg625 form a disordered region. Lys652 participates in a covalent cross-link: Glycyl lysine isopeptide (Lys-Gly) (interchain with G-Cter in SUMO2). 6 C2H2-type zinc fingers span residues Tyr678–His700, Tyr706–His728, Tyr734–His756, Tyr762–His784, His790–His812, and Tyr818–His840.

This sequence belongs to the krueppel C2H2-type zinc-finger protein family.

It localises to the nucleus. May be involved in transcriptional regulation. This chain is Zinc finger and SCAN domain-containing protein 29 (ZSCAN29), found in Homo sapiens (Human).